The chain runs to 66 residues: Large ribosomal subunit protein bL35 (66 aa).

Residues 1-15 (MSKMKTKSGAKKRFK) are compositionally biased toward basic residues. A disordered region spans residues 1–35 (MSKMKTKSGAKKRFKLTASGKVKAGQAGKRHGMIK).

It belongs to the bacterial ribosomal protein bL35 family.

The protein is Large ribosomal subunit protein bL35 of Maricaulis maris (strain MCS10) (Caulobacter maris).